The primary structure comprises 224 residues: Toxin coregulated pilin (224 aa).

The propeptide at 1–25 (MQLLKQLFKKKFVKEEHDKKTGQEG) is atypical leader sequence. Residue Met-26 is modified to N-methylmethionine. A helical transmembrane segment spans residues 26–46 (MTLLEVIIVLGIMGVVSAGVV). A disulfide bond links Cys-145 and Cys-211.

The protein resides in the fimbrium. It localises to the membrane. Its function is as follows. Major component of the toxin co-regulated pilus (tcp) which is a type IV pilus essential for bacterial aggregation and subsequent colonization in the host small intestine. The sequence is that of Toxin coregulated pilin (tcpA) from Vibrio cholerae.